Here is a 735-residue protein sequence, read N- to C-terminus: Type-3 glutamine synthetase (735 aa).

Residues 89 to 183 form the GS beta-grasp domain; the sequence is THYCHWFLPL…IPTAFCSWTG (95 aa). A GS catalytic domain is found at 188–621; that stretch reads QKTPLLRSME…SLYDLVSTLV (434 aa).

It belongs to the glutamine synthetase family. Type 3 subfamily. As to quaternary structure, homohexamer.

The catalysed reaction is L-glutamate + NH4(+) + ATP = L-glutamine + ADP + phosphate + H(+). The sequence is that of Type-3 glutamine synthetase (glnA3) from Dictyostelium discoideum (Social amoeba).